The chain runs to 431 residues: Glutamyl-tRNA(Gln) amidotransferase subunit A (431 aa).

Active-site charge relay system residues include Lys55 and Ser130. Ser154 acts as the Acyl-ester intermediate in catalysis.

This sequence belongs to the amidase family. GatA subfamily. As to quaternary structure, heterotrimer of A, B and C subunits.

It carries out the reaction L-glutamyl-tRNA(Gln) + L-glutamine + ATP + H2O = L-glutaminyl-tRNA(Gln) + L-glutamate + ADP + phosphate + H(+). Allows the formation of correctly charged Gln-tRNA(Gln) through the transamidation of misacylated Glu-tRNA(Gln) in organisms which lack glutaminyl-tRNA synthetase. The reaction takes place in the presence of glutamine and ATP through an activated gamma-phospho-Glu-tRNA(Gln). This Methanococcus maripaludis (strain C5 / ATCC BAA-1333) protein is Glutamyl-tRNA(Gln) amidotransferase subunit A.